The chain runs to 455 residues: UDP-N-acetylmuramoylalanine--D-glutamate ligase (455 aa).

Residue 119-125 (GTNGKTT) participates in ATP binding.

This sequence belongs to the MurCDEF family.

It is found in the cytoplasm. The catalysed reaction is UDP-N-acetyl-alpha-D-muramoyl-L-alanine + D-glutamate + ATP = UDP-N-acetyl-alpha-D-muramoyl-L-alanyl-D-glutamate + ADP + phosphate + H(+). Its pathway is cell wall biogenesis; peptidoglycan biosynthesis. Functionally, cell wall formation. Catalyzes the addition of glutamate to the nucleotide precursor UDP-N-acetylmuramoyl-L-alanine (UMA). The sequence is that of UDP-N-acetylmuramoylalanine--D-glutamate ligase from Listeria innocua serovar 6a (strain ATCC BAA-680 / CLIP 11262).